The following is a 328-amino-acid chain: MTSTKQHKKVILVGDGAVGSSYAFALVNQGIAQELGIIEIPQLHEKAVGDALDLSHALAFTSPKKIYAAQYSDCADADLVVITAGAPQKPGETRLDLVGKNLAINKSIVTQVVESGFKGIFLVAANPVDVLTYSTWKFSGFPKERVIGSGTSLDSARFRQALAEKLDVDARSVHAYIMGEHGDSEFAVWSHANIAGVNLEEFLKDTQNVQEAELIELFEGVRDAAYTIINKKGATYYGIAVALARITKAILDDENAVLPLSVFQEGQYGVENVFIGQPAVVGAHGIIRPVNIPLNDAETQKMQASAKELQAIIDEAWKNPEFQEASKN.

NAD(+) contacts are provided by residues V18, E39, K46, Y71, and 85–86 (GA). Substrate-binding residues include Q88 and R94. Residues S107, 124-126 (AAN), and S149 contribute to the NAD(+) site. 126–129 (NPVD) serves as a coordination point for substrate. 154-157 (DSAR) provides a ligand contact to substrate. Beta-D-fructose 1,6-bisphosphate is bound by residues R159 and H174. H181 functions as the Proton acceptor in the catalytic mechanism. Y226 is modified (phosphotyrosine). Position 235 (T235) interacts with substrate.

Belongs to the LDH/MDH superfamily. LDH family. As to quaternary structure, homotetramer.

The protein localises to the cytoplasm. It catalyses the reaction (S)-lactate + NAD(+) = pyruvate + NADH + H(+). It participates in fermentation; pyruvate fermentation to lactate; (S)-lactate from pyruvate: step 1/1. With respect to regulation, allosterically activated by fructose 1,6-bisphosphate (FBP). Catalyzes the conversion of lactate to pyruvate. The protein is L-lactate dehydrogenase of Streptococcus pneumoniae (strain 70585).